Reading from the N-terminus, the 152-residue chain is MKTPIEVKILDPRIGTQFPLPAYATPGSAGMDLRAMVDTELTLAPGETKLIPTGIAIHVADPSLAAVILPRSGLGHKHGIVLGNLVGLIDSDYQGPLMVSCWNRSDTPFTLTLGERLAQLVFVPVVQAQFTLVDEFERSDRGEGGFGHSGTQ.

Substrate-binding positions include 71-73, Asn-84, 88-90, and Met-98; these read RSG and LID.

The protein belongs to the dUTPase family. The cofactor is Mg(2+).

It catalyses the reaction dUTP + H2O = dUMP + diphosphate + H(+). It participates in pyrimidine metabolism; dUMP biosynthesis; dUMP from dCTP (dUTP route): step 2/2. Functionally, this enzyme is involved in nucleotide metabolism: it produces dUMP, the immediate precursor of thymidine nucleotides and it decreases the intracellular concentration of dUTP so that uracil cannot be incorporated into DNA. The polypeptide is Deoxyuridine 5'-triphosphate nucleotidohydrolase (Shewanella denitrificans (strain OS217 / ATCC BAA-1090 / DSM 15013)).